The following is a 120-amino-acid chain: Reprimo-like protein (120 aa).

A helical transmembrane segment spans residues 67–87 (VAQIAVLCVLSLTVVFGVFFL). At Ser-109 the chain carries Phosphoserine.

It belongs to the reprimo family.

The protein localises to the membrane. The sequence is that of Reprimo-like protein (RPRML) from Homo sapiens (Human).